The primary structure comprises 1217 residues: ATP-dependent helicase/nuclease subunit A (1217 aa).

One can recognise a UvrD-like helicase ATP-binding domain in the interval 10–475 (VIWTDAQWQS…IDLSQNFRSR (466 aa)). 31-38 (AAAGSGKT) serves as a coordination point for ATP. The 311-residue stretch at 476–786 (KEVLSTTNYI…RMMTIHSSKG (311 aa)) folds into the UvrD-like helicase C-terminal domain.

This sequence belongs to the helicase family. AddA subfamily. As to quaternary structure, heterodimer of AddA and AddB/RexB. It depends on Mg(2+) as a cofactor.

It carries out the reaction Couples ATP hydrolysis with the unwinding of duplex DNA by translocating in the 3'-5' direction.. The enzyme catalyses ATP + H2O = ADP + phosphate + H(+). In terms of biological role, the heterodimer acts as both an ATP-dependent DNA helicase and an ATP-dependent, dual-direction single-stranded exonuclease. Recognizes the chi site generating a DNA molecule suitable for the initiation of homologous recombination. The AddA nuclease domain is required for chi fragment generation; this subunit has the helicase and 3' -&gt; 5' nuclease activities. The chain is ATP-dependent helicase/nuclease subunit A from Staphylococcus aureus (strain MSSA476).